A 473-amino-acid chain; its full sequence is GTPase Der (473 aa).

EngA-type G domains follow at residues 3 to 166 (PVIA…ENPE) and 177 to 350 (IRIG…ESAM). GTP-binding positions include 9–16 (GRPNVGKS), 56–60 (DTGGL), 118–121 (NKTD), 183–190 (GRPNVGKS), 230–234 (DTAGV), and 295–298 (NKWD). Positions 351 to 435 (SKWPTNRLTA…PIRFEFKSGE (85 aa)) constitute a KH-like domain. Residues 444–458 (RLTPRQKVKKDNDLK) are compositionally biased toward basic and acidic residues. Residues 444-473 (RLTPRQKVKKDNDLKKGRRIKKTRQKSVKR) are disordered. Over residues 459–473 (KGRRIKKTRQKSVKR) the composition is skewed to basic residues.

It belongs to the TRAFAC class TrmE-Era-EngA-EngB-Septin-like GTPase superfamily. EngA (Der) GTPase family. As to quaternary structure, associates with the 50S ribosomal subunit.

Its function is as follows. GTPase that plays an essential role in the late steps of ribosome biogenesis. The protein is GTPase Der of Marinobacter nauticus (strain ATCC 700491 / DSM 11845 / VT8) (Marinobacter aquaeolei).